We begin with the raw amino-acid sequence, 86 residues long: Omega-theraphotoxin-Hhn1f 3 (86 aa).

A signal peptide spans 1–21; that stretch reads MKSIVFVALFGLALLAVACSA. The propeptide occupies 22–50; the sequence is SEDAHKELLKEVVRAMVVDKTDAVQAEER. Disulfide bonds link cysteine 52-cysteine 66, cysteine 59-cysteine 71, and cysteine 65-cysteine 78.

Belongs to the neurotoxin 10 (Hwtx-1) family. 17 (Hntx-9) subfamily. As to expression, expressed by the venom gland.

Its subcellular location is the secreted. Its function is as follows. Ion channel inhibitor. This is Omega-theraphotoxin-Hhn1f 3 from Cyriopagopus hainanus (Chinese bird spider).